The chain runs to 76 residues: Alpha/kappa-conotoxin-like pl14.1 (76 aa).

A signal peptide spans 1–27; sequence MPSVRSVTCCCLLWMMLSVQLVTPGSP. Residues 28–39 constitute a propeptide that is removed on maturation; the sequence is ATAQLSGQRTAR. Disulfide bonds link cysteine 46–cysteine 61 and cysteine 50–cysteine 63. At asparagine 64 the chain carries Asparagine amide. The propeptide occupies 65-76; the sequence is GKRDVVSSSMAV.

This sequence belongs to the conotoxin J superfamily. In terms of tissue distribution, expressed by the venom duct.

The protein resides in the secreted. In terms of biological role, highly inhibits both nicotinic acetylcholine receptors (neuronal (alpha-3/beta-4) and muscular (alpha-1/beta-1/epsilon/delta) subtypes) and the voltage-gated potassium channel Kv1.6/KCNA6 subtype. In Conus planorbis (Planorbis cone), this protein is Alpha/kappa-conotoxin-like pl14.1.